A 325-amino-acid chain; its full sequence is Protein ORANGE-ORANGE, chloroplastic (325 aa).

The transit peptide at 1 to 54 directs the protein to the chloroplast; the sequence is MDRVLVASYPINHLIRPHSFRIDYCWSTCFTSRLNSGKERQKLSSRWRWRSMAS. Low complexity predominate over residues 53–71; it reads ASDSTDSSSSSSFAPSVES. Residues 53–77 form a disordered region; that stretch reads ASDSTDSSSSSSFAPSVESDPSDKT. Helical transmembrane passes span 164–184 and 217–237; these read LYYVTCYSLIAGIILFGGLLA and IVASFSGGAVGVISALMVVEV. The CR-type-like stretch occupies residues 226 to 317; that stretch reads VGVISALMVV…CTGMAMASEH (92 aa). Residues 248–255 form a CXXCXGXG motif repeat; the sequence is CKYCLGTG. The stretch at 259 to 266 is one CXXCXXXG motif repeat; the sequence is CARCSNTG. A CXXCXGXG motif repeat occupies 292–299; sequence CQNCSGSG. The stretch at 303–310 is one CXXCXXXG motif repeat; it reads CPTCLCTG.

Belongs to the orange-like family.

The protein resides in the plastid. Its subcellular location is the chloroplast membrane. In terms of biological role, triggers accumulation of carotenoids, mainly beta-carotene, in fruit flesh. The chain is Protein ORANGE-ORANGE, chloroplastic from Cucumis melo (Muskmelon).